Here is a 124-residue protein sequence, read N- to C-terminus: uncharacterized protein (124 aa).

Residues 1-22 form the signal peptide; sequence MGTSSVLLMIASSLILLEVVMT.

This is an uncharacterized protein from Caenorhabditis elegans.